A 58-amino-acid polypeptide reads, in one-letter code: uncharacterized protein (58 aa).

Residues 5–27 traverse the membrane as a helical segment; it reads FLHANITIIPHSVLYVSLSYYII.

It is found in the membrane. This is an uncharacterized protein from Saccharomyces cerevisiae (strain ATCC 204508 / S288c) (Baker's yeast).